Reading from the N-terminus, the 335-residue chain is Phosphate acyltransferase (335 aa).

Belongs to the PlsX family. In terms of assembly, homodimer. Probably interacts with PlsY.

It localises to the cytoplasm. It catalyses the reaction a fatty acyl-[ACP] + phosphate = an acyl phosphate + holo-[ACP]. The protein operates within lipid metabolism; phospholipid metabolism. Its function is as follows. Catalyzes the reversible formation of acyl-phosphate (acyl-PO(4)) from acyl-[acyl-carrier-protein] (acyl-ACP). This enzyme utilizes acyl-ACP as fatty acyl donor, but not acyl-CoA. The chain is Phosphate acyltransferase from Streptococcus pyogenes serotype M18 (strain MGAS8232).